The primary structure comprises 385 residues: Probable alginate O-acetylase AlgJ (385 aa).

The N-terminal stretch at 1–21 is a signal peptide; sequence MTRTLRITYSLSFLGLLVGMG. The active site involves aspartate 190. Residue histidine 192 is the Proton acceptor of the active site. The active-site Nucleophile is serine 288.

It belongs to the AlgJ family.

It is found in the cell inner membrane. The protein resides in the periplasm. The protein operates within glycan biosynthesis; alginate biosynthesis. Functionally, together with AlgI and AlgF, forms an inner membrane complex which probably interacts with the alginate polymerization-transport complex and adds acetyl groups at the O-2 and O-3 positions of mannuronate residues. Acetylation of alginate is important for the architecture of biofilms and increases the ability of alginate to act as a defense barrier. The polypeptide is Probable alginate O-acetylase AlgJ (algJ) (Pseudomonas putida (strain ATCC 47054 / DSM 6125 / CFBP 8728 / NCIMB 11950 / KT2440)).